The primary structure comprises 208 residues: A-type ATP synthase subunit E (208 aa).

It belongs to the V-ATPase E subunit family. In terms of assembly, has multiple subunits with at least A(3), B(3), C, D, E, F, H, I and proteolipid K(x).

Its subcellular location is the cell membrane. Its function is as follows. Component of the A-type ATP synthase that produces ATP from ADP in the presence of a proton gradient across the membrane. This is A-type ATP synthase subunit E from Ignicoccus hospitalis (strain KIN4/I / DSM 18386 / JCM 14125).